A 286-amino-acid chain; its full sequence is Pyridoxal kinase PdxY (286 aa).

Substrate contacts are provided by residues Ser-9 and 44-45; that span reads TQ. The ATP site is built by Asp-111, Glu-148, and Lys-181. Asp-222 is a substrate binding site.

The protein belongs to the pyridoxine kinase family. PdxY subfamily. In terms of assembly, homodimer. Mg(2+) serves as cofactor.

The catalysed reaction is pyridoxal + ATP = pyridoxal 5'-phosphate + ADP + H(+). It functions in the pathway cofactor metabolism; pyridoxal 5'-phosphate salvage; pyridoxal 5'-phosphate from pyridoxal: step 1/1. Pyridoxal kinase involved in the salvage pathway of pyridoxal 5'-phosphate (PLP). Catalyzes the phosphorylation of pyridoxal to PLP. The protein is Pyridoxal kinase PdxY of Actinobacillus pleuropneumoniae serotype 5b (strain L20).